Consider the following 69-residue polypeptide: Large ribosomal subunit protein uL29 (69 aa).

This sequence belongs to the universal ribosomal protein uL29 family.

In Parasynechococcus marenigrum (strain WH8102), this protein is Large ribosomal subunit protein uL29.